The primary structure comprises 116 residues: Large ribosomal subunit protein uL22c (116 aa).

The protein belongs to the universal ribosomal protein uL22 family. In terms of assembly, part of the 50S ribosomal subunit.

It is found in the plastid. It localises to the chloroplast. This protein binds specifically to 23S rRNA. Functionally, the globular domain of the protein is located near the polypeptide exit tunnel on the outside of the subunit, while an extended beta-hairpin is found that lines the wall of the exit tunnel in the center of the 70S ribosome. This chain is Large ribosomal subunit protein uL22c (rpl22), found in Psilotum nudum (Whisk fern).